An 880-amino-acid chain; its full sequence is DNA gyrase subunit A (880 aa).

The Topo IIA-type catalytic domain occupies 35–530 (LPDVRDGLKP…ASGDIDLEDL (496 aa)). Catalysis depends on tyrosine 123, which acts as the O-(5'-phospho-DNA)-tyrosine intermediate. Positions 557–563 (QRRGGKG) match the GyrA-box motif.

Belongs to the type II topoisomerase GyrA/ParC subunit family. Heterotetramer, composed of two GyrA and two GyrB chains. In the heterotetramer, GyrA contains the active site tyrosine that forms a transient covalent intermediate with DNA, while GyrB binds cofactors and catalyzes ATP hydrolysis.

Its subcellular location is the cytoplasm. The enzyme catalyses ATP-dependent breakage, passage and rejoining of double-stranded DNA.. In terms of biological role, a type II topoisomerase that negatively supercoils closed circular double-stranded (ds) DNA in an ATP-dependent manner to modulate DNA topology and maintain chromosomes in an underwound state. Negative supercoiling favors strand separation, and DNA replication, transcription, recombination and repair, all of which involve strand separation. Also able to catalyze the interconversion of other topological isomers of dsDNA rings, including catenanes and knotted rings. Type II topoisomerases break and join 2 DNA strands simultaneously in an ATP-dependent manner. This is DNA gyrase subunit A from Haemophilus influenzae (strain ATCC 51907 / DSM 11121 / KW20 / Rd).